The chain runs to 342 residues: MAAEAEQQHQLLSTAVHDTMPGKYVRPESQRPRLDLVVSDARIPVVDLASPDRAAVVSAVGDACRTHGFFQVVNHGIDAALIASVMEVGREFFRLPAEEKAKLYSDDPAKKIRLSTSFNVRKETVHNWRDYLRLHCYPLHQFVPDWPSNPPSFKEIIGTYCTEVRELGFRLYEAISESLGLEGGYMRETLGEQEQHMAVNYYPQCPEPELTYGLPAHTDPNALTILLMDDQVAGLQVLNDGKWIAVNPQPGALVINIGDQLQALSNGKYRSVWHRAVVNSDRERMSVASFLCPCNSVELGPAKKLITDDSPAVYRNYTYDEYYKKFWSRNLDQEHCLELFRT.

The Fe2OG dioxygenase domain maps to 193–293 (QEQHMAVNYY…RMSVASFLCP (101 aa)). Fe cation contacts are provided by H217, D219, and H274. R284 is a binding site for 2-oxoglutarate.

Belongs to the iron/ascorbate-dependent oxidoreductase family. It depends on Fe(2+) as a cofactor. L-ascorbate is required as a cofactor. In terms of tissue distribution, expressed in roots, leaves and stems. Expressed at low levels in seeds.

The catalysed reaction is a (2S)-flavan-4-one + 2-oxoglutarate + O2 = a (2R,3R)-dihydroflavonol + succinate + CO2. The protein operates within secondary metabolite biosynthesis; flavonoid biosynthesis. In terms of biological role, catalyzes the 3-beta-hydroxylation of 2S-flavanones to 2R,3R-dihydroflavonols which are intermediates in the biosynthesis of flavonols, anthocyanidins, catechins and proanthocyanidins in plants. Converts (2S)-eriodictyol to (+)-taxifolin and (2S)-naringenin to (+)-(2R/3R)-dihydrokaempferol in vitro. This chain is Flavanone 3-dioxygenase 2, found in Oryza sativa subsp. japonica (Rice).